A 1357-amino-acid polypeptide reads, in one-letter code: Major yolk protein (1357 aa).

The first 15 residues, 1–15, serve as a signal peptide directing secretion; that stretch reads MRAAILFCLVASSMA. Transferrin-like domains lie at 132-478 and 493-1101; these read VRWC…GEVY and AKIC…AIVK. Residues Asn198, Asn227, Asn304, Asn310, Asn402, Asn499, Asn530, Asn541, Asn572, Asn578, Asn625, Asn639, Asn692, Asn732, Asn741, Asn1035, Asn1043, Asn1081, Asn1128, Asn1208, Asn1241, and Asn1258 are each glycosylated (N-linked (GlcNAc...) asparagine).

The protein belongs to the transferrin family. As to expression, synthesized in the intestines of the females and males and also in ovaries and testis.

Its subcellular location is the secreted. May serve the following two functions: a classical role as a yolk protein precursor and probably shuttle iron to developing germ cells. The sequence is that of Major yolk protein from Strongylocentrotus purpuratus (Purple sea urchin).